We begin with the raw amino-acid sequence, 24 residues long: Sperm protamine P3 (24 aa).

A disordered region spans residues 1 to 24; sequence RRRRRRRRHRRRRGRRGRRSRGRR.

As to expression, testis.

It is found in the nucleus. It localises to the chromosome. In terms of biological role, protamines substitute for histones in the chromatin of sperm during the haploid phase of spermatogenesis. They compact sperm DNA into a highly condensed, stable and inactive complex. The chain is Sperm protamine P3 from Octopus vulgaris (Common octopus).